A 764-amino-acid chain; its full sequence is 5-methyltetrahydropteroyltriglutamate--homocysteine methyltransferase (764 aa).

5-methyltetrahydropteroyltri-L-glutamate contacts are provided by residues 17 to 20 and Lys-117; that span reads RELK. Residues 436-438 and Glu-489 contribute to the L-homocysteine site; that span reads IGS. Residues 436-438 and Glu-489 contribute to the L-methionine site; that span reads IGS. Residues 520–521 and Trp-566 each bind 5-methyltetrahydropteroyltri-L-glutamate; that span reads RC. Asp-604 contributes to the L-homocysteine binding site. Residue Asp-604 coordinates L-methionine. Glu-610 serves as a coordination point for 5-methyltetrahydropteroyltri-L-glutamate. 3 residues coordinate Zn(2+): His-646, Cys-648, and Glu-670. His-699 serves as the catalytic Proton donor. Cys-731 contacts Zn(2+).

Belongs to the vitamin-B12 independent methionine synthase family. It depends on Zn(2+) as a cofactor.

It catalyses the reaction 5-methyltetrahydropteroyltri-L-glutamate + L-homocysteine = tetrahydropteroyltri-L-glutamate + L-methionine. It participates in amino-acid biosynthesis; L-methionine biosynthesis via de novo pathway; L-methionine from L-homocysteine (MetE route): step 1/1. Its function is as follows. Catalyzes the transfer of a methyl group from 5-methyltetrahydrofolate to homocysteine resulting in methionine formation. This Baumannia cicadellinicola subsp. Homalodisca coagulata protein is 5-methyltetrahydropteroyltriglutamate--homocysteine methyltransferase.